The chain runs to 836 residues: Translation initiation factor IF-2 (836 aa).

Residues 1–234 are disordered; that stretch reads MSDTDGKKPL…SLAAMKRKQE (234 aa). The segment covering 18 to 27 has biased composition (polar residues); the sequence is SGQVKQSFSH. A compositionally biased stretch (low complexity) spans 50 to 60; it reads SGSSTTTSSPS. Residues 88-156 are compositionally biased toward basic and acidic residues; that stretch reads KLREVEDAKR…ATRRAEEAKR (69 aa). Over residues 167–176 the composition is skewed to low complexity; sequence PAESRASAPP. Residues 185–206 are compositionally biased toward basic and acidic residues; it reads SRKEREREADRDRTTKKDDSRR. The tr-type G domain maps to 333–501; sequence PRPPIITIMG…NIALQAEILD (169 aa). The tract at residues 342–349 is G1; sequence GHVDHGKT. A GTP-binding site is contributed by 342-349; sequence GHVDHGKT. The G2 stretch occupies residues 367 to 371; that stretch reads GITQH. Positions 389-392 are G3; sequence DTPG. GTP contacts are provided by residues 389–393 and 443–446; these read DTPGH and NKID. The tract at residues 443–446 is G4; it reads NKID. Positions 479–481 are G5; sequence SAK.

It belongs to the TRAFAC class translation factor GTPase superfamily. Classic translation factor GTPase family. IF-2 subfamily.

It localises to the cytoplasm. One of the essential components for the initiation of protein synthesis. Protects formylmethionyl-tRNA from spontaneous hydrolysis and promotes its binding to the 30S ribosomal subunits. Also involved in the hydrolysis of GTP during the formation of the 70S ribosomal complex. The sequence is that of Translation initiation factor IF-2 from Cereibacter sphaeroides (strain ATCC 17029 / ATH 2.4.9) (Rhodobacter sphaeroides).